The primary structure comprises 561 residues: Cytochrome P450 monooxygenase iboC (561 aa).

A helical transmembrane segment spans residues 8 to 28; it reads RFYYQLLAAVLIPALFVAWAA. Cys-484 contributes to the heme binding site.

The protein belongs to the cytochrome P450 family. Heme is required as a cofactor.

The protein resides in the membrane. It functions in the pathway secondary metabolite biosynthesis. Its function is as follows. Cytochrome P450 monooxygenase; part of the gene cluster that mediates the biosynthesis of the psychoactive metabolites ibotenic acid and muscimol. The first committed step is glutamate hydroxylation by the 2-oxoglutarate-dependent dioxygenase iboH, and the last step is decarboxylation of ibotenic acid to muscimol by the decarboxylase iboD. The order of the intermediate reactions is somewhat ambiguous. IboA likely activates the carboxylic acid at position 5 to introduce an amide bond, and the flavin monooxygenase iboF generates the N-O bond. There are several options for the latter step. One option is that iboF directly hydroxylates the amide nitrogen formed by iboA to produce a hydroxamic acid species. Another option is that iboF hydroxylates an external N-containing compound, whose resulting N-O bond is subsequently introduced into the hydroxyglutamate scaffold. The paralogous PLP-dependent cystathionine gamma-synthase-like enzymes iboG1 and iboG2 are likely involved in substitution of the OH group at position 3 by the O-N moiety. The first cyclic intermediate is most probably tricholomic acid which is likely desaturated to ibotenic acid by the cytochrome P450 monooxygenase iboC. The sequence is that of Cytochrome P450 monooxygenase iboC from Amanita muscaria (strain Koide BX008).